We begin with the raw amino-acid sequence, 224 residues long: Voltage-dependent calcium channel gamma-1 subunit (224 aa).

Residues 1 to 10 are Cytoplasmic-facing; the sequence is MSQTKALKVR. The chain crosses the membrane as a helical span at residues 11–29; sequence VTLFCILVGIVLALVAVVT. Residues 30–110 are Extracellular-facing; the sequence is DHWAVLSPHV…TQKEYSISAA (81 aa). 2 N-linked (GlcNAc...) asparagine glycosylation sites follow: asparagine 43 and asparagine 81. Cysteine 57 and cysteine 82 are joined by a disulfide. A helical transmembrane segment spans residues 111–131; the sequence is AIAIFSLGFIILGTICGLLSF. Topologically, residues 132-136 are cytoplasmic; sequence RKKRD. The chain crosses the membrane as a helical span at residues 137–157; that stretch reads YLLRPASMFYAFAGLCIFVSV. Topologically, residues 158-181 are extracellular; it reads EVMRQSVKRMIDSEDTVWIDYYYG. A helical transmembrane segment spans residues 182 to 206; the sequence is WSFACACAAFILLFLGGIALLLFSL. Topologically, residues 207–224 are cytoplasmic; sequence PRMPQYPWESCMDAEPEH.

It belongs to the PMP-22/EMP/MP20 family. CACNG subfamily. In terms of assembly, component of a calcium channel complex consisting of a pore-forming alpha subunit (CACNA1S) and the ancillary subunits CACNB1 or CACNB2, CACNG1 and CACNA2D1. The channel complex contains alpha, beta, gamma and delta subunits in a 1:1:1:1 ratio, i.e. it contains either CACNB1 or CACNB2. In terms of processing, N-glycosylated.

The protein resides in the cell membrane. It is found in the sarcolemma. Functionally, regulatory subunit of the voltage-gated calcium channel that gives rise to L-type calcium currents in skeletal muscle. Regulates channel inactivation kinetics. This chain is Voltage-dependent calcium channel gamma-1 subunit (CACNG1), found in Sus scrofa (Pig).